The sequence spans 118 residues: Large ribosomal subunit protein bL12 (118 aa).

An N-acetylmethionine; in form MA2 modification is found at M1.

It belongs to the bacterial ribosomal protein bL12 family. In terms of assembly, homodimer. Part of the ribosomal stalk of the 50S ribosomal subunit. Forms a multimeric L10(L12)X complex, where L10 forms an elongated spine to which 2 to 4 L12 dimers bind in a sequential fashion. Binds GTP-bound translation factors. Acetylation of Met-1 converts MA1 to MA2.

Its function is as follows. Forms part of the ribosomal stalk which helps the ribosome interact with GTP-bound translation factors. Is thus essential for accurate translation. In Micrococcus luteus (Micrococcus lysodeikticus), this protein is Large ribosomal subunit protein bL12.